The chain runs to 453 residues: Protein vestigial (453 aa).

Residues 145 to 279 (AAGHSLHSSH…GGGLAGSGQG (135 aa)) are disordered. Residues 151–177 (HSSHRTHAHSLAHAHTHPHSHTHTHTH) are compositionally biased toward basic residues. The span at 178–193 (QTKEEDLIVPRSEAEA) shows a compositional bias: basic and acidic residues. Composition is skewed to gly residues over residues 227–253 (HGGG…GGTG) and 267–278 (GSGGGGLAGSGQ). The tract at residues 279–335 (GQAQYLSASCVVFTNYSGDTASQVDEHFSRALNYNNKDSKESSSPMSNRNFPPSFWN) is ser-rich sd binding domain.

As to quaternary structure, the Ser-rich protein domain within the C-terminal region interacts with the C-terminus of sd to form a complex which acts as a selector for wing development. Interacts with Dhfr. Expressed in the developing wing primordia initially along the D/V wing boundary, and by the late third larval instar, maximal expression is seen in cells at the D/V wing disk boundary. Less expression is seen in cells located farther from this boundary.

The protein resides in the nucleus. Functionally, involved in determining which thoracic imaginal disk cells will form wings and halteres, perhaps by interacting with other nuclear regulatory proteins. When in combination with scalloped (sd), it acts as a transcriptional activation complex that regulates gene expression in the wing. Binding to sd switches the DNA target selectivity of sd. Required and sufficient for cell proliferation at the dorsal/ventral (D/V) boundary of the wing imaginal disk. Also required for cell proliferation in the wing imaginal disk, mediated via activation of E2f. By interacting with Dhfr, may control genes involved in DNA replication. The protein is Protein vestigial (vg) of Drosophila melanogaster (Fruit fly).